We begin with the raw amino-acid sequence, 394 residues long: Cytochrome b (394 aa).

4 helical membrane passes run phenylalanine 39 to methionine 59, tryptophan 83 to phenylalanine 105, valine 120 to valine 140, and phenylalanine 186 to alanine 206. The heme b site is built by histidine 89 and histidine 103. Heme b is bound by residues histidine 191 and histidine 204. Histidine 209 provides a ligand contact to a ubiquinone. 4 helical membrane-spanning segments follow: residues phenylalanine 232 to phenylalanine 252, alanine 296 to lysine 316, isoleucine 328 to cysteine 348, and phenylalanine 355 to proline 374.

The protein belongs to the cytochrome b family. In terms of assembly, the main subunits of complex b-c1 are: cytochrome b, cytochrome c1 and the Rieske protein. Heme b serves as cofactor.

The protein resides in the mitochondrion inner membrane. Functionally, component of the ubiquinol-cytochrome c reductase complex (complex III or cytochrome b-c1 complex) that is part of the mitochondrial respiratory chain. The b-c1 complex mediates electron transfer from ubiquinol to cytochrome c. Contributes to the generation of a proton gradient across the mitochondrial membrane that is then used for ATP synthesis. The protein is Cytochrome b (MT-CYB) of Oenothera berteroana (Bertero's evening primrose).